A 131-amino-acid chain; its full sequence is Jacalin-related lectin 15 (131 aa).

Residues 1 to 126 (MSTPSGSNPL…LTSLGAYFAP (126 aa)) enclose the Jacalin-type lectin domain.

The protein belongs to the jacalin lectin family. In terms of tissue distribution, expressed in the vascular and surrounding tissues in cotyledons. Detected in root apical meristems.

The polypeptide is Jacalin-related lectin 15 (JAL15) (Arabidopsis thaliana (Mouse-ear cress)).